The following is a 920-amino-acid chain: Ubiquitin ligase-binding protein BUL2 (920 aa).

A compositionally biased stretch (polar residues) spans 1 to 10; sequence MTFTFSTSSR. Residues 1–89 form a disordered region; that stretch reads MTFTFSTSSR…EENSLEMDCT (89 aa). T22 carries the post-translational modification Phosphothreonine. Residues 35–57 show a composition bias toward polar residues; it reads QQLSSNSTDNSLHPNSGQTPRAS. The segment covering 73–82 has biased composition (basic and acidic residues); it reads DRLRQEREEN. The PY-motif signature appears at 129–133; it reads FPPSY. The residue at position 557 (S557) is a Phosphoserine.

This sequence belongs to the BUL1 family. In terms of assembly, component of the RSP5-BUL1/2 ubiquitin ligase complex composed of at least RSP5 and BUL1 or BUL2.

It localises to the cytoplasm. The protein operates within protein modification; protein ubiquitination. Component of a RSP5 ubiquitin ligase complex which specifies polyubiquitination and intracellular trafficking of the general amino acid permease GAP1 as well as other permeases such as PMA1. The RSP5-BUL1/2 complex is also necessary for the heat-shock element (HSE)-mediated gene expression, nitrogen starvation GLN3-dependent transcription and pressure-induced differential regulation of the 2 tryptophan permeases TAT1 and TAT2. This Saccharomyces cerevisiae (strain ATCC 204508 / S288c) (Baker's yeast) protein is Ubiquitin ligase-binding protein BUL2 (BUL2).